The sequence spans 332 residues: MKVQILGMGHSLPERILNNQELEQMVDTSNEWIVERTGILERRIADKDTATSDLCWQAAKMALERSATEAKELDLIIVGTSSPDMLFPSTACIVQDHLGARNAAAFDVEAGCTGFIYALGIAEKFLLSPEYKKILVIGADLCSRFTDYTDRNTCVLFGDGAGAAVVGKGNLGPGILSSYLAADGSGGKHLYMPAGGSALPPSKETVEQRLHFIRMDGNEIFRFATKIVVAVSEKLLSQAGLSYQDVDLFIPHQANLRIIKTAMKRMRIPAEKTLINLDHFGNMSAACIPVGLSMAEEAGKLKKGDLVLMVAFGAGLSYGGILLRWGRDQDVF.

Catalysis depends on residues Cys112 and His252. Residues 253–257 (QANLR) form an ACP-binding region. The active site involves Asn282.

Belongs to the thiolase-like superfamily. FabH family. As to quaternary structure, homodimer.

It localises to the cytoplasm. It catalyses the reaction malonyl-[ACP] + acetyl-CoA + H(+) = 3-oxobutanoyl-[ACP] + CO2 + CoA. It participates in lipid metabolism; fatty acid biosynthesis. Its function is as follows. Catalyzes the condensation reaction of fatty acid synthesis by the addition to an acyl acceptor of two carbons from malonyl-ACP. Catalyzes the first condensation reaction which initiates fatty acid synthesis and may therefore play a role in governing the total rate of fatty acid production. Possesses both acetoacetyl-ACP synthase and acetyl transacylase activities. Its substrate specificity determines the biosynthesis of branched-chain and/or straight-chain of fatty acids. The chain is Beta-ketoacyl-[acyl-carrier-protein] synthase III from Syntrophomonas wolfei subsp. wolfei (strain DSM 2245B / Goettingen).